An 865-amino-acid polypeptide reads, in one-letter code: Bifunctional uridylyltransferase/uridylyl-removing enzyme (865 aa).

The uridylyltransferase stretch occupies residues 1-318 (MPHVDLNPLK…FPRPDSDARL (318 aa)). A uridylyl-removing region spans residues 319-675 (IDDDFRNLRE…VRPTEHGEGL (357 aa)). The HD domain occupies 437–559 (VDQHTLAVVR…VGDERRLAAL (123 aa)). 2 ACT domains span residues 676-762 (QVMV…RLPH) and 789-865 (RLSV…QQAA). The segment at 747-767 (DPHAARHAHAPRRLPHSHARR) is disordered. Residues 751–767 (ARHAHAPRRLPHSHARR) show a composition bias toward basic residues.

It belongs to the GlnD family. The cofactor is Mg(2+).

The catalysed reaction is [protein-PII]-L-tyrosine + UTP = [protein-PII]-uridylyl-L-tyrosine + diphosphate. It carries out the reaction [protein-PII]-uridylyl-L-tyrosine + H2O = [protein-PII]-L-tyrosine + UMP + H(+). Its activity is regulated as follows. Uridylyltransferase (UTase) activity is inhibited by glutamine, while glutamine activates uridylyl-removing (UR) activity. Functionally, modifies, by uridylylation and deuridylylation, the PII regulatory proteins (GlnB and homologs), in response to the nitrogen status of the cell that GlnD senses through the glutamine level. Under low glutamine levels, catalyzes the conversion of the PII proteins and UTP to PII-UMP and PPi, while under higher glutamine levels, GlnD hydrolyzes PII-UMP to PII and UMP (deuridylylation). Thus, controls uridylylation state and activity of the PII proteins, and plays an important role in the regulation of nitrogen assimilation and metabolism. In Bordetella bronchiseptica (strain ATCC BAA-588 / NCTC 13252 / RB50) (Alcaligenes bronchisepticus), this protein is Bifunctional uridylyltransferase/uridylyl-removing enzyme.